Reading from the N-terminus, the 579-residue chain is Mitochondrial distribution and morphology protein 36 (579 aa).

The segment at 1-27 is disordered; that stretch reads MDENGTVKPGYELKGLNSGNSRSNMDK. Serine 42 is modified (phosphoserine). Disordered regions lie at residues 378–401 and 446–518; these read TPIN…GRRL and DNKH…ESQS. Residues 379–390 show a composition bias toward polar residues; the sequence is PINSSDSDNLSN. Over residues 446–463 the composition is skewed to basic and acidic residues; sequence DNKHSTKDTDSNIRRNEH. Residues 495–518 are compositionally biased toward low complexity; it reads PSQSSSRMSTLPLSPSSSLLESQS.

Involved in mitochondrial distribution and morphology. The polypeptide is Mitochondrial distribution and morphology protein 36 (MDM36) (Saccharomyces cerevisiae (strain ATCC 204508 / S288c) (Baker's yeast)).